The sequence spans 88 residues: Cell division topological specificity factor (88 aa).

Belongs to the MinE family.

Prevents the cell division inhibition by proteins MinC and MinD at internal division sites while permitting inhibition at polar sites. This ensures cell division at the proper site by restricting the formation of a division septum at the midpoint of the long axis of the cell. In Cronobacter sakazakii (strain ATCC BAA-894) (Enterobacter sakazakii), this protein is Cell division topological specificity factor.